A 212-amino-acid chain; its full sequence is Ribonuclease HII (212 aa).

Positions 12–201 (ELVAGVDEVG…VRAMLEQVSI (190 aa)) constitute an RNase H type-2 domain. A divalent metal cation is bound by residues Asp18, Glu19, and Asp110.

Belongs to the RNase HII family. Mn(2+) serves as cofactor. It depends on Mg(2+) as a cofactor.

The protein localises to the cytoplasm. It catalyses the reaction Endonucleolytic cleavage to 5'-phosphomonoester.. In terms of biological role, endonuclease that specifically degrades the RNA of RNA-DNA hybrids. The sequence is that of Ribonuclease HII from Stutzerimonas stutzeri (strain A1501) (Pseudomonas stutzeri).